We begin with the raw amino-acid sequence, 290 residues long: Shikimate dehydrogenase (NADP(+)) (290 aa).

Shikimate-binding positions include 20–22 (SLS) and threonine 67. The active-site Proton acceptor is lysine 71. Shikimate contacts are provided by asparagine 92 and aspartate 107. NADP(+) contacts are provided by residues 132-136 (GAGGA) and methionine 228. Residue tyrosine 230 participates in shikimate binding. NADP(+) is bound at residue glycine 251.

Belongs to the shikimate dehydrogenase family. In terms of assembly, homodimer.

It catalyses the reaction shikimate + NADP(+) = 3-dehydroshikimate + NADPH + H(+). It functions in the pathway metabolic intermediate biosynthesis; chorismate biosynthesis; chorismate from D-erythrose 4-phosphate and phosphoenolpyruvate: step 4/7. Its function is as follows. Involved in the biosynthesis of the chorismate, which leads to the biosynthesis of aromatic amino acids. Catalyzes the reversible NADPH linked reduction of 3-dehydroshikimate (DHSA) to yield shikimate (SA). The polypeptide is Shikimate dehydrogenase (NADP(+)) (Citrifermentans bemidjiense (strain ATCC BAA-1014 / DSM 16622 / JCM 12645 / Bem) (Geobacter bemidjiensis)).